The primary structure comprises 199 residues: GTP cyclohydrolase-2 (199 aa).

Residue 49 to 53 (RIHSE) participates in GTP binding. Positions 54, 65, and 67 each coordinate Zn(2+). GTP is bound by residues glutamine 70, 92–94 (EGR), and threonine 114. Aspartate 126 (proton acceptor) is an active-site residue. The Nucleophile role is filled by arginine 128. GTP-binding residues include threonine 149 and lysine 154.

It belongs to the GTP cyclohydrolase II family. In terms of assembly, homodimer. Zn(2+) serves as cofactor.

The catalysed reaction is GTP + 4 H2O = 2,5-diamino-6-hydroxy-4-(5-phosphoribosylamino)-pyrimidine + formate + 2 phosphate + 3 H(+). Its pathway is cofactor biosynthesis; riboflavin biosynthesis; 5-amino-6-(D-ribitylamino)uracil from GTP: step 1/4. In terms of biological role, catalyzes the conversion of GTP to 2,5-diamino-6-ribosylamino-4(3H)-pyrimidinone 5'-phosphate (DARP), formate and pyrophosphate. The polypeptide is GTP cyclohydrolase-2 (Blochmanniella floridana).